We begin with the raw amino-acid sequence, 322 residues long: Arginase-1 (322 aa).

K17 is modified (N6-succinyllysine). Phosphoserine is present on residues S62 and S72. The residue at position 75 (K75) is an N6-succinyllysine. Mn(2+) contacts are provided by H101, D124, H126, and D128. Residues 126-130 (HTDIN) and 137-139 (SGN) contribute to the substrate site. S163 is subject to Phosphoserine. Substrate is bound at residue D183. A Phosphoserine modification is found at S217. Mn(2+) is bound by residues D232 and D234. Positions 246 and 277 each coordinate substrate.

The protein belongs to the arginase family. Homotrimer. Interacts with CMTM6. Requires Mn(2+) as cofactor. In terms of tissue distribution, within the immune system initially reported to be selectively expressed in granulocytes (polymorphonuclear leukocytes [PMNs]). Also detected in macrophages mycobacterial granulomas. Expressed in group2 innate lymphoid cells (ILC2s) during lung disease.

It is found in the cytoplasm. It localises to the cytoplasmic granule. It carries out the reaction L-arginine + H2O = urea + L-ornithine. It functions in the pathway nitrogen metabolism; urea cycle; L-ornithine and urea from L-arginine: step 1/1. Key element of the urea cycle converting L-arginine to urea and L-ornithine, which is further metabolized into metabolites proline and polyamides that drive collagen synthesis and bioenergetic pathways critical for cell proliferation, respectively; the urea cycle takes place primarily in the liver and, to a lesser extent, in the kidneys. Its function is as follows. Functions in L-arginine homeostasis in nonhepatic tissues characterized by the competition between nitric oxide synthase (NOS) and arginase for the available intracellular substrate arginine. Arginine metabolism is a critical regulator of innate and adaptive immune responses. Involved in an antimicrobial effector pathway in polymorphonuclear granulocytes (PMN). Upon PMN cell death is liberated from the phagolysosome and depletes arginine in the microenvironment leading to suppressed T cell and natural killer (NK) cell proliferation and cytokine secretion. In group 2 innate lymphoid cells (ILC2s) promotes acute type 2 inflammation in the lung and is involved in optimal ILC2 proliferation but not survival. In humans, the immunological role in the monocytic/macrophage/dendritic cell (DC) lineage is unsure. This is Arginase-1 (ARG1) from Homo sapiens (Human).